A 432-amino-acid chain; its full sequence is Metacaspase-1 (432 aa).

Residues 1–11 are compositionally biased toward basic residues; that stretch reads MEVMDHHHHTS. Disordered stretches follow at residues 1–21 and 41–87; these read MEVM…TTRR and PQPG…PNAP. Positions 12-21 are enriched in low complexity; the sequence is STRPNPTTRR. Residues 46-74 are compositionally biased toward pro residues; that stretch reads GAPPPQGGYGYPQPPPPQQPYGYSQPPPQ. Active-site residues include His223 and Cys279.

This sequence belongs to the peptidase C14B family.

Involved in cell death (apoptosis). The chain is Metacaspase-1 (casA) from Sclerotinia sclerotiorum (strain ATCC 18683 / 1980 / Ss-1) (White mold).